Here is a 567-residue protein sequence, read N- to C-terminus: Dihydrolipoyl dehydrogenase 2, chloroplastic (567 aa).

The transit peptide at 1–67 (MQSVLSLSFS…HIQSRRIEVS (67 aa)) directs the protein to the chloroplast. Residues 114 to 122 (EGDVVGGTC), Lys-131, Gly-197, and 221 to 223 (TGS) contribute to the FAD site. Cys-122 and Cys-127 are joined by a disulfide. Residues 258-265 (GSGYIGLE), Glu-281, and Gly-354 contribute to the NAD(+) site. Residues Asp-400 and 406-409 (MLAH) each bind FAD. The Proton acceptor role is filled by His-536.

This sequence belongs to the class-I pyridine nucleotide-disulfide oxidoreductase family. In terms of assembly, homodimer. Part of the plastidial pyruvate dehydrogenase complex (PDC) containing multiple copies of three enzymatic components: pyruvate dehydrogenase (E1), dihydrolipoamide acetyltransferase (E2) and lipoamide dehydrogenase (E3). The cofactor is FAD. Expressed mainly in flower buds and immature siliques, and to a lesser extent in flowers.

It localises to the plastid. Its subcellular location is the chloroplast stroma. The enzyme catalyses N(6)-[(R)-dihydrolipoyl]-L-lysyl-[protein] + NAD(+) = N(6)-[(R)-lipoyl]-L-lysyl-[protein] + NADH + H(+). Functionally, lipoamide dehydrogenase is a component of the plastidial pyruvate dehydrogenase complex (PDC). The chain is Dihydrolipoyl dehydrogenase 2, chloroplastic (LPD2) from Arabidopsis thaliana (Mouse-ear cress).